Reading from the N-terminus, the 278-residue chain is HTH-type transcriptional regulator HdfR (278 aa).

Residues 1-58 enclose the HTH lysR-type domain; the sequence is MDTELLKTFLEVSRTRHFGRAAEALYLTQSAVSFRIRQLENQLGVNLFTRHRNNIRLT. Positions 18 to 37 form a DNA-binding region, H-T-H motif; the sequence is FGRAAEALYLTQSAVSFRIR.

The protein belongs to the LysR transcriptional regulatory family.

In terms of biological role, negatively regulates the transcription of the flagellar master operon flhDC by binding to the upstream region of the operon. This chain is HTH-type transcriptional regulator HdfR, found in Salmonella schwarzengrund (strain CVM19633).